Here is a 326-residue protein sequence, read N- to C-terminus: Putative HTH-type transcriptional regulatory protein MmarC5_0898 (326 aa).

One can recognise an HTH cro/C1-type domain in the interval 128–183; that stretch reads LRETREKLKISVGELAEISRVSRKTIYKYEQNEANPSAEVAIKIEEYLDVPLIKGI. The segment at residues 139 to 158 is a DNA-binding region (H-T-H motif); sequence VGELAEISRVSRKTIYKYEQ.

The polypeptide is Putative HTH-type transcriptional regulatory protein MmarC5_0898 (Methanococcus maripaludis (strain C5 / ATCC BAA-1333)).